The sequence spans 619 residues: ATP-dependent RNA helicase abstrakt (619 aa).

Residues 1–11 (MAHVKRYRRSS) are compositionally biased toward basic residues. 2 disordered regions span residues 1–25 (MAHV…EDYV) and 50–69 (ETAQ…SQGA). Residues S11, S13, S14, S56, S57, S58, and S66 each carry the phosphoserine modification. Residues 177 to 205 (RSFREMKFPKGILNGLAAKGIKNPTPIQV) carry the Q motif motif. One can recognise a Helicase ATP-binding domain in the interval 208-392 (LPTVLAGRDL…RSALVKPVTI (185 aa)). 221–228 (AFTGSGKT) contributes to the ATP binding site. The DEAD box motif lies at 340–343 (DEAD). In terms of domain architecture, Helicase C-terminal spans 403-563 (NVTQQVEYVK…EVPDFLDELA (161 aa)). The CCHC-type zinc finger occupies 577 to 594 (HGCTYCGGLGHRITECPK).

It belongs to the DEAD box helicase family. DDX41 subfamily.

Its subcellular location is the nucleus. It catalyses the reaction ATP + H2O = ADP + phosphate + H(+). Its function is as follows. ATP-dependent RNA helicase. Is essential for the directed and fasciculated early outgrowth of the bolwig nerves, as well as for its navigation at later stages. Is required during post-transcriptional gene expression. Plays a role during morphogenetic process, apoptosis and the establishment of cell polarity. The sequence is that of ATP-dependent RNA helicase abstrakt (abs) from Drosophila melanogaster (Fruit fly).